A 59-amino-acid chain; its full sequence is Large ribosomal subunit protein uL30 (59 aa).

This sequence belongs to the universal ribosomal protein uL30 family. In terms of assembly, part of the 50S ribosomal subunit.

The protein is Large ribosomal subunit protein uL30 of Actinobacillus pleuropneumoniae serotype 7 (strain AP76).